Here is a 314-residue protein sequence, read N- to C-terminus: Formimidoylglutamase (314 aa).

Positions 127, 153, 155, 157, 245, and 247 each coordinate Mn(2+).

It belongs to the arginase family. Requires Mn(2+) as cofactor.

The enzyme catalyses N-formimidoyl-L-glutamate + H2O = formamide + L-glutamate. It participates in amino-acid degradation; L-histidine degradation into L-glutamate; L-glutamate from N-formimidoyl-L-glutamate (hydrolase route): step 1/1. Functionally, catalyzes the conversion of N-formimidoyl-L-glutamate to L-glutamate and formamide. The polypeptide is Formimidoylglutamase (Aeromonas salmonicida (strain A449)).